We begin with the raw amino-acid sequence, 102 residues long: NADH-quinone oxidoreductase subunit K (102 aa).

Transmembrane regions (helical) follow at residues 5 to 25, 30 to 50, and 62 to 82; these read LGHY…GIFL, IIVI…NLVA, and VFAL…LAVL.

It belongs to the complex I subunit 4L family. As to quaternary structure, NDH-1 is composed of 14 different subunits. Subunits NuoA, H, J, K, L, M, N constitute the membrane sector of the complex.

It is found in the cell inner membrane. It catalyses the reaction a quinone + NADH + 5 H(+)(in) = a quinol + NAD(+) + 4 H(+)(out). NDH-1 shuttles electrons from NADH, via FMN and iron-sulfur (Fe-S) centers, to quinones in the respiratory chain. The immediate electron acceptor for the enzyme in this species is believed to be ubiquinone. Couples the redox reaction to proton translocation (for every two electrons transferred, four hydrogen ions are translocated across the cytoplasmic membrane), and thus conserves the redox energy in a proton gradient. The protein is NADH-quinone oxidoreductase subunit K of Bradyrhizobium sp. (strain BTAi1 / ATCC BAA-1182).